The sequence spans 143 residues: uncharacterized protein (143 aa).

Residues 11–139 form the HTH marR-type domain; the sequence is EYELTTFIRR…FGELLQRMNK (129 aa). A DNA-binding region (H-T-H motif) is located at residues 53 to 76; the sequence is VKELAESFKLDISTLSRQAAALEA.

This is an uncharacterized protein from Bacillus subtilis (strain 168).